The primary structure comprises 313 residues: Intelectin-1 (313 aa).

The N-terminal stretch at Met-1 to Ser-18 is a signal peptide. Residues Ser-32–Arg-255 form the Fibrinogen C-terminal domain. An intrachain disulfide couples Cys-41 to Cys-70. Ca(2+) is bound by residues His-86, Glu-87, Asp-89, Gly-92, Gly-97, Asp-98, and Asp-133. Disulfide bonds link Cys-94/Cys-280, Cys-199/Cys-259, and Cys-251/Cys-265. N-linked (GlcNAc...) asparagine glycosylation is present at Asn-163. Residues Asn-260, Glu-262, Glu-274, and Asp-282 each coordinate Ca(2+). A carbohydrate contacts are provided by residues Glu-262–His-263 and Glu-274. A lipid anchor (GPI-anchor amidated serine) is attached at Ser-298. Positions Ser-299–Arg-313 are excised as a propeptide.

Homotrimer; disulfide-linked. May interact with LTF. In terms of processing, N-glycosylated. Highly expressed in omental adipose tissue where it is found in stromal vascular cells but not in fat cells but is barely detectable in subcutaneous adipose tissue (at protein level). Highly expressed in the small intestine. Also found in the heart, testis, colon, salivary gland, skeletal muscle, pancreas and thyroid and, to a lesser degree, in the uterus, spleen, prostate, lymph node and thymus.

The protein localises to the cell membrane. Its subcellular location is the secreted. Lectin that specifically recognizes microbial carbohydrate chains in a calcium-dependent manner. Binds to microbial glycans that contain a terminal acyclic 1,2-diol moiety, including beta-linked D-galactofuranose (beta-Galf), D-phosphoglycerol-modified glycans, D-glycero-D-talo-oct-2-ulosonic acid (KO) and 3-deoxy-D-manno-oct-2-ulosonic acid (KDO). Binds to glycans from Gram-positive and Gram-negative bacteria, including K.pneumoniae, S.pneumoniae, Y.pestis, P.mirabilis and P.vulgaris. Does not bind human glycans. Probably plays a role in the defense system against microorganisms. May function as adipokine that has no effect on basal glucose uptake but enhances insulin-stimulated glucose uptake in adipocytes. Increases AKT phosphorylation in the absence and presence of insulin. May interact with lactoferrin/LTF and increase its uptake, and may thereby play a role in iron absorption. This is Intelectin-1 (ITLN1) from Homo sapiens (Human).